Reading from the N-terminus, the 120-residue chain is MNAQEIIRSLEAEQLKSNLPEIHVGDTVKVGVIIQEGNKERTQPYEGIVIAKRNSGINATITVRRIFQGVGVERVFLLHSPRVESIKIIKRGKVRRAKLYYLRDRVGKATRVKQRFDREL.

Belongs to the bacterial ribosomal protein bL19 family.

This protein is located at the 30S-50S ribosomal subunit interface and may play a role in the structure and function of the aminoacyl-tRNA binding site. The chain is Large ribosomal subunit protein bL19 from Cyanothece sp. (strain PCC 7425 / ATCC 29141).